Here is a 610-residue protein sequence, read N- to C-terminus: Protein SAN1 (610 aa).

Over residues 1–10 (MSESGQEQNR) the composition is skewed to polar residues. 2 disordered regions span residues 1–36 (MSES…NGGA) and 176–231 (VDST…PSIP). The span at 11-36 (GTNTSPNNAENNNNSNAASGPLNGGA) shows a compositional bias: low complexity. The segment covering 194–203 (EGTKKRKDNE) has biased composition (basic and acidic residues). Residues 210 to 223 (TADNDSNPSITNAT) show a composition bias toward polar residues. The RING-type zinc-finger motif lies at 240–280 (NDEETNPSYKHSPIKLPCGHIFGRECIYKWSRLENSCPLCR). Disordered regions lie at residues 318-348 (TAVN…ASSG), 360-453 (VPQN…TDPH), 471-502 (GTSD…TTQG), 514-554 (GHFT…GVAS), and 569-610 (NNNS…RSSQ). The segment covering 319–348 (AVNSTNENSSAPSENTSNTTVPTIGNASSG) has biased composition (polar residues). Low complexity-rich tracts occupy residues 384 to 406 (NGPS…NQSP) and 425 to 447 (PSAS…NTSS). Polar residues predominate over residues 471–492 (GTSDTSATTAPGAQTVHNQGRN). Residues 493–502 (DSSSSDTTQG) show a composition bias toward low complexity. Composition is skewed to polar residues over residues 533 to 554 (QQRG…GVAS) and 592 to 610 (DTTI…RSSQ).

In terms of biological role, plays a specific role in mating-type regulation of yeast, by acting post-translationally to control the stability or activity of the SIR4 proteins. This Saccharomyces cerevisiae (strain ATCC 204508 / S288c) (Baker's yeast) protein is Protein SAN1 (SAN1).